Reading from the N-terminus, the 256-residue chain is 1-(5-phosphoribosyl)-5-[(5-phosphoribosylamino)methylideneamino] imidazole-4-carboxamide isomerase (256 aa).

D8 serves as the catalytic Proton acceptor. D130 acts as the Proton donor in catalysis.

It belongs to the HisA/HisF family.

It is found in the cytoplasm. It catalyses the reaction 1-(5-phospho-beta-D-ribosyl)-5-[(5-phospho-beta-D-ribosylamino)methylideneamino]imidazole-4-carboxamide = 5-[(5-phospho-1-deoxy-D-ribulos-1-ylimino)methylamino]-1-(5-phospho-beta-D-ribosyl)imidazole-4-carboxamide. The protein operates within amino-acid biosynthesis; L-histidine biosynthesis; L-histidine from 5-phospho-alpha-D-ribose 1-diphosphate: step 4/9. The chain is 1-(5-phosphoribosyl)-5-[(5-phosphoribosylamino)methylideneamino] imidazole-4-carboxamide isomerase from Chlorobium phaeovibrioides (strain DSM 265 / 1930) (Prosthecochloris vibrioformis (strain DSM 265)).